A 136-amino-acid chain; its full sequence is Large ribosomal subunit protein uL16c (136 aa).

Positions 1-20 (MLSPKRTRFRKQHRGRMKGK) are disordered.

Belongs to the universal ribosomal protein uL16 family. In terms of assembly, part of the 50S ribosomal subunit.

It is found in the plastid. The protein resides in the chloroplast. This is Large ribosomal subunit protein uL16c from Triticum aestivum (Wheat).